We begin with the raw amino-acid sequence, 100 residues long: MYB-like transcription factor TCL2 (100 aa).

The 38-residue stretch at 37–74 (TEQEEDLIFRMHRLVGDRWDLIAGRVVGREAKDIERYW) folds into the Myb-like domain.

In terms of assembly, interacts with GL3. As to expression, expressed in cotyledons, petioles, rosette leaves, hydathodes, cauline leaves, stems, pedicels and flower buds.

It localises to the nucleus. In terms of biological role, MYB-type transcription factor involved in trichome cell specification. Acts as a negative regulator of trichome patterning and formation. May function by suppressing the expression of GL3. The polypeptide is MYB-like transcription factor TCL2 (TCL2) (Arabidopsis thaliana (Mouse-ear cress)).